Consider the following 799-residue polypeptide: Zinc finger protein 227 (799 aa).

Residues 23-94 enclose the KRAB domain; that stretch reads VTFKDVAVVF…ETETQRSSKH (72 aa). 19 consecutive C2H2-type zinc fingers follow at residues 250-272, 269-291, 324-346, 352-374, 380-402, 408-430, 436-458, 464-486, 492-514, 520-542, 548-570, 576-598, 604-626, 632-654, 660-682, 688-710, 716-738, 744-766, and 772-794; these read HPCG…PNVH, PNVH…QRIH, YRCD…YRTH, YKCE…QRVH, YKCD…RRVH, YKCE…FRVH, YKCK…QNVH, FKCE…QRVH, YRCD…QVIH, YKCG…QRVH, YKCD…QRGH, HICE…LGVH, and YKCD…QKVH.

It belongs to the krueppel C2H2-type zinc-finger protein family.

The protein resides in the nucleus. May be involved in transcriptional regulation. The sequence is that of Zinc finger protein 227 (ZNF227) from Homo sapiens (Human).